The primary structure comprises 358 residues: 3-isopropylmalate dehydrogenase (358 aa).

77–90 (GEKWDSLPRELRPE) provides a ligand contact to NAD(+). Substrate-binding residues include Arg-97, Arg-107, Arg-135, and Asp-220. Mg(2+)-binding residues include Asp-220, Asp-244, and Asp-248. 277 to 289 (GSAPDIAGQGIAN) provides a ligand contact to NAD(+).

This sequence belongs to the isocitrate and isopropylmalate dehydrogenases family. LeuB type 1 subfamily. In terms of assembly, homodimer. Mg(2+) is required as a cofactor. The cofactor is Mn(2+).

Its subcellular location is the cytoplasm. The catalysed reaction is (2R,3S)-3-isopropylmalate + NAD(+) = 4-methyl-2-oxopentanoate + CO2 + NADH. The protein operates within amino-acid biosynthesis; L-leucine biosynthesis; L-leucine from 3-methyl-2-oxobutanoate: step 3/4. Its function is as follows. Catalyzes the oxidation of 3-carboxy-2-hydroxy-4-methylpentanoate (3-isopropylmalate) to 3-carboxy-4-methyl-2-oxopentanoate. The product decarboxylates to 4-methyl-2 oxopentanoate. The sequence is that of 3-isopropylmalate dehydrogenase from Wolinella succinogenes (strain ATCC 29543 / DSM 1740 / CCUG 13145 / JCM 31913 / LMG 7466 / NCTC 11488 / FDC 602W) (Vibrio succinogenes).